The chain runs to 101 residues: Integration host factor subunit alpha (101 aa).

Belongs to the bacterial histone-like protein family. Heterodimer of an alpha and a beta chain.

Functionally, this protein is one of the two subunits of integration host factor, a specific DNA-binding protein that functions in genetic recombination as well as in transcriptional and translational control. The sequence is that of Integration host factor subunit alpha from Saccharophagus degradans (strain 2-40 / ATCC 43961 / DSM 17024).